Here is a 692-residue protein sequence, read N- to C-terminus: Elongation factor G (692 aa).

Residues 8–282 (EKVRNIGIAA…AVVDYLPAPT (275 aa)) form the tr-type G domain. Residues 17–24 (AHIDAGKT), 81–85 (DTPGH), and 135–138 (NKMD) contribute to the GTP site.

This sequence belongs to the TRAFAC class translation factor GTPase superfamily. Classic translation factor GTPase family. EF-G/EF-2 subfamily.

It is found in the cytoplasm. Catalyzes the GTP-dependent ribosomal translocation step during translation elongation. During this step, the ribosome changes from the pre-translocational (PRE) to the post-translocational (POST) state as the newly formed A-site-bound peptidyl-tRNA and P-site-bound deacylated tRNA move to the P and E sites, respectively. Catalyzes the coordinated movement of the two tRNA molecules, the mRNA and conformational changes in the ribosome. The polypeptide is Elongation factor G (Trichormus variabilis (strain ATCC 29413 / PCC 7937) (Anabaena variabilis)).